The chain runs to 128 residues: Large ribosomal subunit protein bL12 (128 aa).

It belongs to the bacterial ribosomal protein bL12 family. Homodimer. Part of the ribosomal stalk of the 50S ribosomal subunit. Forms a multimeric L10(L12)X complex, where L10 forms an elongated spine to which 2 to 4 L12 dimers bind in a sequential fashion. Binds GTP-bound translation factors.

Its function is as follows. Forms part of the ribosomal stalk which helps the ribosome interact with GTP-bound translation factors. Is thus essential for accurate translation. The sequence is that of Large ribosomal subunit protein bL12 from Picosynechococcus sp. (strain ATCC 27264 / PCC 7002 / PR-6) (Agmenellum quadruplicatum).